A 669-amino-acid chain; its full sequence is MIEDVEDEILRLKNIIKRWNREYYVDSSPSVGDLTYDKALLRLQDLESKYPEYKTLDSPTFRFGSDLLNDFEEVKHSFPILSLDKTYDIKGLSLWIEKMVLESAISGLHTGISVEPKIDGCSIVLHYKDGILEKALTRGDGRVGNDVTENVKTIRNVPLRIDEKIELVLRGEIYITKENFLKINRTLKNPYVNARNLASGILRRISSKEVANFPLDIFVYDILYSSLKLNTSHDAFDKLKQFGFKVNPFCEFFGGKNLEAGIIAHVKKIEALRDSFEYEIDGVVLKIDSFILRKILGSTSHHPKWSIAYKFESCTGMSKVVDIVVQVGRSGKITPVAHVEKVLVAGASITNASLHNQDYIDFVGLNVGDIVVISRRGDVIPAVDLVIEKLAVGSFKIPSNCPSCKMTLIKEGAHLFCVNRHCSCRIIEQVKYFCSKKCMNIVGLSEKTIEFLFEKKFISSEVELYTFNCDRLINLKGFNLKRINNLKRSIEDSKSRPFRKLLLGMGIKDLGENTILVLINNNLNSFDTISTLCKNKEAALAKLLKIKGIGERIALNIIEAFNDKTILDKFNFFKELGLKMEEDNTNDAVYDSFLFGKKFCITGSFKGYSRDVLIEKLTKKGAVFSRSVTKCLDFLLVGEKFGLKVQKANNLGIKTFSLFDIKDFVDLDD.

Residues 33–37 (DLTYD), 82–83 (SL), and E115 each bind NAD(+). K117 (N6-AMP-lysine intermediate) is an active-site residue. The NAD(+) site is built by R138, E172, K286, and K310. The Zn(2+) site is built by C401, C404, C417, and C422.

The protein belongs to the NAD-dependent DNA ligase family. LigA subfamily. Requires Mg(2+) as cofactor. It depends on Mn(2+) as a cofactor.

It catalyses the reaction NAD(+) + (deoxyribonucleotide)n-3'-hydroxyl + 5'-phospho-(deoxyribonucleotide)m = (deoxyribonucleotide)n+m + AMP + beta-nicotinamide D-nucleotide.. Functionally, DNA ligase that catalyzes the formation of phosphodiester linkages between 5'-phosphoryl and 3'-hydroxyl groups in double-stranded DNA using NAD as a coenzyme and as the energy source for the reaction. It is essential for DNA replication and repair of damaged DNA. This Borrelia hermsii (strain HS1 / DAH) protein is DNA ligase.